The primary structure comprises 587 residues: ATP-dependent zinc metalloprotease FtsH 2 (587 aa).

Over 1–12 (MSSDRTREVTKR) the chain is Cytoplasmic. The helical transmembrane segment at 13–33 (ILMVLFGLWLLQFFFLPPLTT) threads the bilayer. The Extracellular segment spans residues 34–102 (RPTELSYSAF…EQRYEVTRTP (69 aa)). A helical transmembrane segment spans residues 103–123 (WWVTLLPTVLWLAVMVGLFAW). The Cytoplasmic segment spans residues 124 to 587 (AQKRQAGAFG…GDDVRRILSA (464 aa)). Position 192-199 (192-199 (GPPGTGKT)) interacts with ATP. A Zn(2+)-binding site is contributed by His416. Residue Glu417 is part of the active site. The Zn(2+) site is built by His420 and Asp492.

It in the central section; belongs to the AAA ATPase family. This sequence in the C-terminal section; belongs to the peptidase M41 family. In terms of assembly, homohexamer. Zn(2+) serves as cofactor.

The protein resides in the cell membrane. Acts as a processive, ATP-dependent zinc metallopeptidase for both cytoplasmic and membrane proteins. Plays a role in the quality control of integral membrane proteins. The chain is ATP-dependent zinc metalloprotease FtsH 2 from Symbiobacterium thermophilum (strain DSM 24528 / JCM 14929 / IAM 14863 / T).